The following is a 1169-amino-acid chain: ATP-dependent helicase/deoxyribonuclease subunit B (1169 aa).

Positions 1–285 constitute a UvrD-like helicase ATP-binding domain; it reads MEIQFLAGRS…TIFERNHRHL (285 aa). ATP is bound at residue 8 to 15; it reads GRSGSGKT. Residues 280–586 form the UvrD-like helicase C-terminal domain; the sequence is RNHRHLYTPD…KFALIPPSLD (307 aa). Residues C801, C1121, C1124, and C1130 each contribute to the [4Fe-4S] cluster site.

Belongs to the helicase family. AddB/RexB type 1 subfamily. Heterodimer of AddA and AddB. Mg(2+) serves as cofactor. The cofactor is [4Fe-4S] cluster.

In terms of biological role, the heterodimer acts as both an ATP-dependent DNA helicase and an ATP-dependent, dual-direction single-stranded exonuclease. Recognizes the chi site generating a DNA molecule suitable for the initiation of homologous recombination. The AddB subunit has 5' -&gt; 3' nuclease activity but not helicase activity. In Bacillus pumilus (strain SAFR-032), this protein is ATP-dependent helicase/deoxyribonuclease subunit B.